The primary structure comprises 150 residues: Endoribonuclease YbeY (150 aa).

Zn(2+) is bound by residues His113, His117, and His123.

It belongs to the endoribonuclease YbeY family. Requires Zn(2+) as cofactor.

It is found in the cytoplasm. In terms of biological role, single strand-specific metallo-endoribonuclease involved in late-stage 70S ribosome quality control and in maturation of the 3' terminus of the 16S rRNA. This Wolbachia sp. subsp. Drosophila simulans (strain wRi) protein is Endoribonuclease YbeY.